A 194-amino-acid chain; its full sequence is MRERTEARRRRIEEVLRRRQPDLTVLLENVHKPHNLSAILRTCDAVGVLEAHAVNPTGGVPTFNETSGGSHKWVYLRVHPDLHEAFRFLKERGFTVYATALREDARDFREVDYTKPTAVLFGAEKWGVSEEALALADGAIKIPMLGMVQSLNVSVAAAVILFEAQRQRLKAGLYDRPRLDPELYQKVLADWLRK.

S-adenosyl-L-methionine-binding positions include Thr99, 122–126 (GAEKW), Ile142, and Leu151.

Belongs to the class IV-like SAM-binding methyltransferase superfamily. RNA methyltransferase TrmH family. In terms of assembly, monomer.

It carries out the reaction guanosine(18) in tRNA + S-adenosyl-L-methionine = 2'-O-methylguanosine(18) in tRNA + S-adenosyl-L-homocysteine + H(+). Stimulated by magnesium ions and spermine. Inhibited by S-adenosyl-homocysteine. In terms of biological role, catalyzes the 2'-O methylation of guanosine at position 18 in tRNA. This Thermus thermophilus (strain ATCC BAA-163 / DSM 7039 / HB27) protein is tRNA (guanosine(18)-2'-O)-methyltransferase.